The sequence spans 376 residues: Queuine tRNA-ribosyltransferase (376 aa).

Catalysis depends on Asp-92, which acts as the Proton acceptor. Substrate-binding positions include 92–96 (DSGGF), Asp-146, Gln-190, and Gly-217. The tract at residues 248 to 254 (GVGRPED) is RNA binding. Asp-267 serves as the catalytic Nucleophile. Positions 272-276 (TRNAR) are RNA binding; important for wobble base 34 recognition. Residues Cys-305, Cys-307, Cys-310, and His-337 each coordinate Zn(2+).

The protein belongs to the queuine tRNA-ribosyltransferase family. Homodimer. Within each dimer, one monomer is responsible for RNA recognition and catalysis, while the other monomer binds to the replacement base PreQ1. The cofactor is Zn(2+).

The enzyme catalyses 7-aminomethyl-7-carbaguanine + guanosine(34) in tRNA = 7-aminomethyl-7-carbaguanosine(34) in tRNA + guanine. The protein operates within tRNA modification; tRNA-queuosine biosynthesis. Functionally, catalyzes the base-exchange of a guanine (G) residue with the queuine precursor 7-aminomethyl-7-deazaguanine (PreQ1) at position 34 (anticodon wobble position) in tRNAs with GU(N) anticodons (tRNA-Asp, -Asn, -His and -Tyr). Catalysis occurs through a double-displacement mechanism. The nucleophile active site attacks the C1' of nucleotide 34 to detach the guanine base from the RNA, forming a covalent enzyme-RNA intermediate. The proton acceptor active site deprotonates the incoming PreQ1, allowing a nucleophilic attack on the C1' of the ribose to form the product. After dissociation, two additional enzymatic reactions on the tRNA convert PreQ1 to queuine (Q), resulting in the hypermodified nucleoside queuosine (7-(((4,5-cis-dihydroxy-2-cyclopenten-1-yl)amino)methyl)-7-deazaguanosine). This Stenotrophomonas maltophilia (strain K279a) protein is Queuine tRNA-ribosyltransferase.